The sequence spans 486 residues: Cobyric acid synthase (486 aa).

Residues 250-438 (AFRIVVPVPP…LHGMFDTPSA (189 aa)) enclose the GATase cobBQ-type domain. Cys-331 functions as the Nucleophile in the catalytic mechanism. Residue His-430 is part of the active site.

It belongs to the CobB/CobQ family. CobQ subfamily.

It participates in cofactor biosynthesis; adenosylcobalamin biosynthesis. Its function is as follows. Catalyzes amidations at positions B, D, E, and G on adenosylcobyrinic A,C-diamide. NH(2) groups are provided by glutamine, and one molecule of ATP is hydrogenolyzed for each amidation. The chain is Cobyric acid synthase from Herminiimonas arsenicoxydans.